Here is a 245-residue protein sequence, read N- to C-terminus: 1-(5-phosphoribosyl)-5-[(5-phosphoribosylamino)methylideneamino] imidazole-4-carboxamide isomerase (245 aa).

Aspartate 7 functions as the Proton acceptor in the catalytic mechanism. Residue aspartate 129 is the Proton donor of the active site.

It belongs to the HisA/HisF family.

The protein localises to the cytoplasm. The catalysed reaction is 1-(5-phospho-beta-D-ribosyl)-5-[(5-phospho-beta-D-ribosylamino)methylideneamino]imidazole-4-carboxamide = 5-[(5-phospho-1-deoxy-D-ribulos-1-ylimino)methylamino]-1-(5-phospho-beta-D-ribosyl)imidazole-4-carboxamide. The protein operates within amino-acid biosynthesis; L-histidine biosynthesis; L-histidine from 5-phospho-alpha-D-ribose 1-diphosphate: step 4/9. This Alteromonas mediterranea (strain DSM 17117 / CIP 110805 / LMG 28347 / Deep ecotype) protein is 1-(5-phosphoribosyl)-5-[(5-phosphoribosylamino)methylideneamino] imidazole-4-carboxamide isomerase.